A 130-amino-acid chain; its full sequence is Small ribosomal subunit protein uS11 (130 aa).

The protein belongs to the universal ribosomal protein uS11 family. In terms of assembly, part of the 30S ribosomal subunit. Interacts with proteins S7 and S18. Binds to IF-3.

Functionally, located on the platform of the 30S subunit, it bridges several disparate RNA helices of the 16S rRNA. Forms part of the Shine-Dalgarno cleft in the 70S ribosome. This chain is Small ribosomal subunit protein uS11, found in Campylobacter fetus subsp. fetus (strain 82-40).